Consider the following 74-residue polypeptide: Bacteriocin hiracin-JM79 (74 aa).

The signal sequence occupies residues 1–30; sequence MKKKVLKHCVILGILGTCLAGIGTGIKVDA.

It localises to the secreted. Its function is as follows. Bacteriocin with antibacterial activity against the Gram-positive Listeria, Enterococcus, Propionibacterium, Staphylococcus and some strains of Clostridium, Lactobacillus and Pediococcus. Lacks antibacterial activity against Gram-negative bacteria. This chain is Bacteriocin hiracin-JM79, found in Enterococcus hirae.